The primary structure comprises 252 residues: MSDWNPSLYLHFSAERSRPAVELLARVPLENVEYVADLGCGPGNSTALLHQRWPAARITGIDSSPAMIAEARSALPDCQFVEADIRNWQPEQALDLIFANASLQWLPDHYELFPHLVSLLNPQGVLAVQMPDNWLEPTHVLMREVAWEQNYPDRGREPLAGVHAYYDILSEAGCEVDIWRTTYYHQMPSHQAIIDWVTATGLRPWLQDLTESEQQLFLTRYHQMLEEQYPLQENGQILLAFPRLFIVARRTE.

The protein belongs to the methyltransferase superfamily. Tam family.

The protein localises to the cytoplasm. It carries out the reaction trans-aconitate + S-adenosyl-L-methionine = (E)-3-(methoxycarbonyl)pent-2-enedioate + S-adenosyl-L-homocysteine. Functionally, catalyzes the S-adenosylmethionine monomethyl esterification of trans-aconitate. In Shigella flexneri, this protein is Trans-aconitate 2-methyltransferase.